A 95-amino-acid polypeptide reads, in one-letter code: Aspartyl/glutamyl-tRNA(Asn/Gln) amidotransferase subunit C (95 aa).

Belongs to the GatC family. In terms of assembly, heterotrimer of A, B and C subunits.

The enzyme catalyses L-glutamyl-tRNA(Gln) + L-glutamine + ATP + H2O = L-glutaminyl-tRNA(Gln) + L-glutamate + ADP + phosphate + H(+). It catalyses the reaction L-aspartyl-tRNA(Asn) + L-glutamine + ATP + H2O = L-asparaginyl-tRNA(Asn) + L-glutamate + ADP + phosphate + 2 H(+). Functionally, allows the formation of correctly charged Asn-tRNA(Asn) or Gln-tRNA(Gln) through the transamidation of misacylated Asp-tRNA(Asn) or Glu-tRNA(Gln) in organisms which lack either or both of asparaginyl-tRNA or glutaminyl-tRNA synthetases. The reaction takes place in the presence of glutamine and ATP through an activated phospho-Asp-tRNA(Asn) or phospho-Glu-tRNA(Gln). This Nitratidesulfovibrio vulgaris (strain DSM 19637 / Miyazaki F) (Desulfovibrio vulgaris) protein is Aspartyl/glutamyl-tRNA(Asn/Gln) amidotransferase subunit C.